The chain runs to 70 residues: Small ribosomal subunit protein bS21 (70 aa).

The protein belongs to the bacterial ribosomal protein bS21 family.

The sequence is that of Small ribosomal subunit protein bS21 from Campylobacter curvus (strain 525.92).